A 605-amino-acid chain; its full sequence is F-box/WD repeat-containing protein 1A (605 aa).

Residues 128–177 (ASYEKEKELCVKYFEQWSESDQVEFVEHLISQMCHYQHGHINSYLKPMLQ) are homodimerization domain D. The region spanning 182–228 (TALPARGLDHIAENILSYLDAKSLCAAELVCKEWYRVTSDGMLWKKL) is the F-box domain. The segment at 190–228 (DHIAENILSYLDAKSLCAAELVCKEWYRVTSDGMLWKKL) is required for down-regulation of SNAI1. WD repeat units lie at residues 301 to 338 (ETSKGVYCLQYDDQKIVSGLRDNTIKIWDKSTLECKRI), 341 to 378 (GHTGSVLCLQYDERVIITGSSDSTVRVWDVNAGEMLNT), 381 to 418 (HHCEAVLHLRFNNGMMVTCSKDRSIAVWDMASPTDITL), 424 to 461 (GHRAAVNVVDFDDKYIVSASGDRTIKVWNTSTCEFVRT), 464 to 503 (GHKRGIACLQYRDRLVVSGSSDNTIRLWDIECGACLRVLE), 505 to 541 (HEELVRCIRFDNKRIVSGAYDGKIKVWDLMAALDPRA), and 553 to 590 (EHSGRVFRLQFDEFQIVSSSHDDTILIWDFLNDPAAHA).

Homodimer. Self-associates. Component of the SCF(BTRC) complex, composed of SKP1, CUL1 and BTRC. Direct interaction with SKP1 with SKP1 occurs via the F-box domain. Interacts with phosphorylated ubiquitination substrates SMAD3 and SMAD4. Interacts with phosphorylated ubiquitination substrates CTNNB1, NFKBIA, NFKBIB, NFKBIE, NFKB1/nuclear factor NF-kappa-B p105 subunit, ATF4, CDC25A, DLG1, FBXO5 and SNAI1; the interaction requires the phosphorylation of the 2 serine residues in the substrate destruction motif D-S-G-X(2,3,4)-S. Binds UBQLN1. Interacts with CDC34 and UBE2R2. Interacts with FBXW11. Interacts with CUL4A and DDB1. Part of a SCF(BTRC)-like complex lacking CUL1, which is associated with phosphorylated NKBIA and RELA; RELA interacts directly with NFKBIA. Interacts with the phosphorylated form of GLI3. Interacts with CLU. Interacts with PER1 (phosphorylated), PER2 (phosphorylated) and PER3. Interacts with phosphorylated ubiquitination substrate CEP68. Interacts with ZC3H12A; this interaction occurs when ZC3H12A is phosphorylated in a IKBKB/IKKB-dependent manner. Interacts with HSF1; this interaction occurs during mitosis and induces HSF1 ubiquitin-dependent degradation, a process inhibited by CDC20. Interacts with NFE2L1. Interacts with INAVA. Interacts with IL10RA; this interaction leads to IL10RA ubiquitination and subsequent degradation. Interacts with REST. Interacts with KLF4; this interaction leads to KLF4 ubiquitination and subsequent degradation. Interacts with UBR2, as part of a SCF(BTRC) complex; the interaction mediates 'Lys-48'-linked ubiquitination of UBR2 and is regulated by DUSP22 in the T-cell receptor signaling pathway. Post-translationally, ubiquitinated via 'Lys-11'-linked polyubiquitin by some cullin-5-RING E3 ubiquitin-protein ligase complex (ECS complex), leading to its degradation. Deubiquitinated by OTUD5, promoting its stability. As to expression, expressed in heart, brain, liver, skeletal muscle and, most strongly, in testis.

The protein localises to the cytoplasm. It localises to the nucleus. It functions in the pathway protein modification; protein ubiquitination. Its function is as follows. Substrate recognition component of a SCF (SKP1-CUL1-F-box protein) E3 ubiquitin-protein ligase complex which mediates the ubiquitination and subsequent proteasomal degradation of target proteins. Recognizes and binds to phosphorylated target proteins. SCF(BTRC) mediates the ubiquitination of phosphorylated NFKB, ATF4, CDC25A, DLG1, FBXO5, PER1, SMAD3, SMAD4, SNAI1 and probably NFKB2. SCF(BTRC) mediates the ubiquitination of CTNNB1 and participates in Wnt signaling. SCF(BTRC) mediates the ubiquitination of NFKBIA, NFKBIB and NFKBIE; the degradation frees the associated NFKB1 to translocate into the nucleus and to activate transcription. Ubiquitination of NFKBIA occurs at 'Lys-21' and 'Lys-22'. The SCF(FBXW11) complex also regulates NF-kappa-B by mediating ubiquitination of phosphorylated NFKB1: specifically ubiquitinates the p105 form of NFKB1, leading to its degradation. SCF(BTRC) mediates the ubiquitination of CEP68; this is required for centriole separation during mitosis. SCF(BTRC) mediates the ubiquitination and subsequent degradation of nuclear NFE2L1. Has an essential role in the control of the clock-dependent transcription via degradation of phosphorylated PER1 and PER2. May be involved in ubiquitination and subsequent proteasomal degradation through a DBB1-CUL4 E3 ubiquitin-protein ligase. Required for activation of NFKB-mediated transcription by IL1B, MAP3K14, MAP3K1, IKBKB and TNF. Required for proteolytic processing of GLI3. Mediates ubiquitination of REST, thereby leading to its proteasomal degradation. SCF(BTRC) mediates the ubiquitination and subsequent proteasomal degradation of KLF4; thereby negatively regulating cell pluripotency maintenance and embryogenesis. SCF(BTRC) acts as a regulator of mTORC1 signaling pathway by catalyzing ubiquitination and subsequent proteasomal degradation of phosphorylated DEPTOR, TFE3 and MITF. SCF(BTRC) directs 'Lys-48'-linked ubiquitination of UBR2 in the T-cell receptor signaling pathway. This Mus musculus (Mouse) protein is F-box/WD repeat-containing protein 1A.